The following is a 703-amino-acid chain: Glycine--tRNA ligase beta subunit (703 aa).

It belongs to the class-II aminoacyl-tRNA synthetase family. Tetramer of two alpha and two beta subunits.

It is found in the cytoplasm. It catalyses the reaction tRNA(Gly) + glycine + ATP = glycyl-tRNA(Gly) + AMP + diphosphate. The sequence is that of Glycine--tRNA ligase beta subunit from Myxococcus xanthus (strain DK1622).